A 184-amino-acid chain; its full sequence is Small ribosomal subunit protein uS4 (184 aa).

Residues 108–172 enclose the S4 RNA-binding domain; it reads RRLQTQVHRL…SPMTKESHPE (65 aa). Positions 163–184 are disordered; the sequence is SPMTKESHPERPAQIAASVVEE.

Belongs to the universal ribosomal protein uS4 family. In terms of assembly, part of the 30S ribosomal subunit. Contacts protein S5. The interaction surface between S4 and S5 is involved in control of translational fidelity.

Its function is as follows. One of the primary rRNA binding proteins, it binds directly to 16S rRNA where it nucleates assembly of the body of the 30S subunit. Functionally, with S5 and S12 plays an important role in translational accuracy. The sequence is that of Small ribosomal subunit protein uS4 from Methanococcoides burtonii (strain DSM 6242 / NBRC 107633 / OCM 468 / ACE-M).